A 5635-amino-acid chain; its full sequence is Hemicentin-1 (5635 aa).

A signal peptide spans 1–21 (MISWEVVHTVFLFALLYSSLA). The 176-residue stretch at 41 to 216 (TLAFVFDVTG…EVLKWVEEAV (176 aa)) folds into the VWFA domain. N349 and N390 each carry an N-linked (GlcNAc...) asparagine glycan. Ig-like C2-type domains are found at residues 431–517 (PKVT…FDVS), 520–607 (PPVI…VFLT), 612–697 (PKVT…STLR), 702–788 (PKLM…ITLD), 793–883 (PVFI…TTVT), 890–976 (PLIG…TSVV), 981–1067 (PTIQ…VQLT), 1072–1166 (PRVF…VKLN), 1171–1255 (PKIQ…TEIT), 1262–1354 (PTVE…YNLK), 1358–1447 (PPVI…FNID), 1452–1541 (PTII…IKLT), 1546–1634 (PSIK…FHVD), 1638–1724 (PPMI…KEIK), 1733–1821 (PAIE…FEVT), 1826–1914 (PTIK…IQLH), 1919–2007 (PSLE…YSLQ), 2012–2097 (PSIS…RDID), 2104–2190 (PNIM…YNVN), 2195–2285 (PNIG…YNLQ), 2290–2379 (PTIT…YDLS), 2384–2470 (PSII…RKIF), 2478–2564 (PHIV…RSFS), 2571–2662 (PTIA…YEVK), 2666–2763 (PPII…VNIQ), 2766–2864 (PSFQ…YDVR), 2868–2959 (PPII…FNLN), 2964–3051 (PSVI…FSLT), 3056–3146 (PSIK…FHLN), 3151–3240 (PSIE…YFLS), 3245–3335 (PSVA…FNLN), 3340–3429 (PTIR…YNLQ), 3434–3516 (PNMD…GEVS), 3527–3615 (PHIN…YLVR), 3620–3708 (PNIA…FILT), 3713–3797 (PNIK…RRID), 3804–3892 (PSIA…VDLT), 3897–3983 (PSIA…VTLH), 3988–4076 (PVIQ…LNVQ), 4079–4164 (PVIS…TKLT), 4169–4255 (PRIR…VSLT), 4260–4344 (PTFT…GFVY), 4348–4435 (PPVF…MSLT), and 4440–4527 (PIIT…VIVQ). C451 and C499 form a disulfide bridge. 4 N-linked (GlcNAc...) asparagine glycosylation sites follow: N528, N550, N573, and N620. The cysteines at positions 541 and 591 are disulfide-linked. A disulfide bridge connects residues C633 and C681. N693 is a glycosylation site (N-linked (GlcNAc...) asparagine). C723 and C772 are disulfide-bonded. The N-linked (GlcNAc...) asparagine glycan is linked to N809. Disulfide bonds link C814–C867 and C911–C960. N-linked (GlcNAc...) asparagine glycosylation is present at N970. 2 disulfides stabilise this stretch: C1002/C1051 and C1101/C1150. N1158 is a glycosylation site (N-linked (GlcNAc...) asparagine). Residues C1192 and C1241 are joined by a disulfide bond. N-linked (GlcNAc...) asparagine glycosylation occurs at N1272. Residues C1288 and C1338 are joined by a disulfide bond. N1369 is a glycosylation site (N-linked (GlcNAc...) asparagine). 2 disulfides stabilise this stretch: C1382–C1431 and C1475–C1525. N1552 carries an N-linked (GlcNAc...) asparagine glycan. 4 disulfide bridges follow: C1569–C1618, C1663–C1712, C1756–C1805, and C1848–C1898. N-linked (GlcNAc...) asparagine glycosylation occurs at N1929. 2 cysteine pairs are disulfide-bonded: C1942-C1991 and C2033-C2083. Residues N2112 and N2155 are each glycosylated (N-linked (GlcNAc...) asparagine). Cystine bridges form between C2125-C2174, C2218-C2269, and C2314-C2363. An N-linked (GlcNAc...) asparagine glycan is attached at N2395. Intrachain disulfides connect C2408/C2457, C2501/C2550, and C2597/C2646. Residue N2689 is glycosylated (N-linked (GlcNAc...) asparagine). Disulfide bonds link C2696-C2745 and C2799-C2848. N-linked (GlcNAc...) asparagine glycosylation is present at N2887. Cysteines 2894 and 2943 form a disulfide. N2973 carries N-linked (GlcNAc...) asparagine glycosylation. 6 disulfides stabilise this stretch: C2986-C3035, C3081-C3130, C3173-C3224, C3268-C3319, C3364-C3413, and C3457-C3506. N-linked (GlcNAc...) asparagine glycosylation is found at N3221 and N3300. An N-linked (GlcNAc...) asparagine glycan is attached at N3530. Cystine bridges form between C3550–C3599 and C3643–C3692. Residues N3689 and N3727 are each glycosylated (N-linked (GlcNAc...) asparagine). C3734 and C3783 form a disulfide bridge. N-linked (GlcNAc...) asparagine glycosylation is present at N3812. Intrachain disulfides connect C3825–C3876, C3918–C3967, C4009–C4058, C4100–C4148, C4190–C4239, C4281–C4328, C4371–C4419, C4461–C4509, C4541–C4578, C4545–C4583, C4556–C4568, C4598–C4635, C4602–C4640, C4613–C4625, C4655–C4692, C4659–C4697, C4670–C4682, C4712–C4749, C4716–C4754, C4727–C4739, C4769–C4806, C4773–C4811, C4784–C4796, C4826–C4863, C4830–C4868, and C4841–C4853. N4029 carries N-linked (GlcNAc...) asparagine glycosylation. N4401 and N4491 each carry an N-linked (GlcNAc...) asparagine glycan. 6 consecutive TSP type-1 domains span residues 4529–4584 (HGGF…KPCP), 4586–4641 (DGSW…RPCP), 4643–4698 (HGAW…RNCP), 4700–4755 (HGKW…DPCP), 4757–4812 (HGNW…DMCP), and 4814–4869 (DGSW…QACP). Residue N4606 is glycosylated (N-linked (GlcNAc...) asparagine). Positions 4871-5093 (GPQRARGSVI…SKGDRSNQCP (223 aa)) constitute a Nidogen G2 beta-barrel domain. N-linked (GlcNAc...) asparagine glycans are attached at residues N4894 and N5040. The EGF-like 1; calcium-binding domain maps to 5107–5146 (DEDECAAGNPCSHSCHNAMGTYYCSCPKGLTIAADGRTCQ). 3 disulfides stabilise this stretch: C5111–C5121, C5117–C5130, and C5132–C5145. One can recognise an EGF-like 2; calcium-binding domain in the interval 5147-5191 (DIDECALGRHTCHAGQDCDNTIGSYRCVVRCGSGFRRTSDGLSCQ). The EGF-like 3; calcium-binding domain occupies 5192–5229 (DINECQESSPCHQRCFNAIGSFHCGCEPGYQLKGRKCM). Intrachain disulfides connect C5196–C5206, C5202–C5215, and C5217–C5228. The EGF-like 4; calcium-binding domain maps to 5230–5271 (DVNECRQNVCRPDQHCKNTRGGYKCIDLCPNGMTKAENGTCI). The N-linked (GlcNAc...) asparagine glycan is linked to N5267. The EGF-like 5; calcium-binding domain occupies 5272–5307 (DIDECKDGTHQCRYNQICENTRGSYRCVCPRGYRSQ). 8 disulfides stabilise this stretch: C5276–C5289, C5283–C5298, C5319–C5330, C5326–C5339, C5341–C5354, C5436–C5446, C5442–C5455, and C5457–C5470. The region spanning 5315–5355 (DINECEQVPKPCAHQCSNTPGSFKCICPPGQHLLGDGKSCA) is the EGF-like 6; calcium-binding domain. The EGF-like 7; calcium-binding domain occupies 5432-5471 (DIDECENTDACQHECKNTFGSYQCICPPGYQLTHNGKTCQ). N-linked (GlcNAc...) asparagine glycosylation occurs at N5615.

As to expression, expressed in hair follicles and in the dermis (at protein level). Expressed in skin fibroblasts and retinal pigment epithelium (RPE) cells.

It is found in the secreted. The protein resides in the extracellular space. Its subcellular location is the extracellular matrix. The protein localises to the basement membrane. It localises to the cytoplasm. It is found in the cell junction. The protein resides in the cleavage furrow. Its function is as follows. Involved in transforming growth factor beta-mediated rearrangement of the podocyte cytoskeleton which includes reduction of F-actin fibers and broadening, flattening and elongation of podocytes. Plays a role in basement membrane organization. May promote cleavage furrow maturation during cytokinesis in preimplantation embryos. May play a role in the architecture of adhesive and flexible epithelial cell junctions. May play a role during myocardial remodeling by imparting an effect on cardiac fibroblast migration. The chain is Hemicentin-1 (HMCN1) from Homo sapiens (Human).